The primary structure comprises 360 residues: Phospho-N-acetylmuramoyl-pentapeptide-transferase (360 aa).

Helical transmembrane passes span arginine 25–isoleucine 45, methionine 74–glycine 94, tyrosine 97–tyrosine 117, tyrosine 134–alanine 154, valine 168–serine 188, glycine 199–alanine 219, alanine 236–phenylalanine 256, valine 263–isoleucine 283, phenylalanine 288–valine 308, and isoleucine 339–phenylalanine 359.

It belongs to the glycosyltransferase 4 family. MraY subfamily. The cofactor is Mg(2+).

The protein resides in the cell inner membrane. The catalysed reaction is UDP-N-acetyl-alpha-D-muramoyl-L-alanyl-gamma-D-glutamyl-meso-2,6-diaminopimeloyl-D-alanyl-D-alanine + di-trans,octa-cis-undecaprenyl phosphate = di-trans,octa-cis-undecaprenyl diphospho-N-acetyl-alpha-D-muramoyl-L-alanyl-D-glutamyl-meso-2,6-diaminopimeloyl-D-alanyl-D-alanine + UMP. Its pathway is cell wall biogenesis; peptidoglycan biosynthesis. In terms of biological role, catalyzes the initial step of the lipid cycle reactions in the biosynthesis of the cell wall peptidoglycan: transfers peptidoglycan precursor phospho-MurNAc-pentapeptide from UDP-MurNAc-pentapeptide onto the lipid carrier undecaprenyl phosphate, yielding undecaprenyl-pyrophosphoryl-MurNAc-pentapeptide, known as lipid I. This chain is Phospho-N-acetylmuramoyl-pentapeptide-transferase, found in Cellvibrio japonicus (strain Ueda107) (Pseudomonas fluorescens subsp. cellulosa).